Reading from the N-terminus, the 131-residue chain is Large ribosomal subunit protein bL17 (131 aa).

Belongs to the bacterial ribosomal protein bL17 family. Part of the 50S ribosomal subunit. Contacts protein L32.

The sequence is that of Large ribosomal subunit protein bL17 from Teredinibacter turnerae (strain ATCC 39867 / T7901).